A 196-amino-acid chain; its full sequence is Inner membrane protein YdjM (196 aa).

Topologically, residues 1-23 (MTAEGHLLFSIACAVFAKNAELT) are periplasmic. Residues 24 to 44 (PVLAQGDWWHIVPSAILTCLL) form a helical membrane-spanning segment. Topologically, residues 45 to 77 (PDIDHPKSFLGQRLKWISKPIARAFGHRGFTHS) are cytoplasmic. A helical transmembrane segment spans residues 78-98 (LLAVFALLATFYLKVPEGWFI). At 99 to 106 (PADALQGM) the chain is on the periplasmic side. The helical transmembrane segment at 107–127 (VLGYLSHILADMLTPAGVPLL) threads the bilayer. The Cytoplasmic portion of the chain corresponds to 128 to 149 (WPCRWRFRLPILVPQKGNQLER). The helical transmembrane segment at 150 to 170 (FICMALFVWSVWMPHSLPENS) threads the bilayer. At 171 to 196 (AVRWSSQMINTLQIQFHRLIKHQVEY) the chain is on the periplasmic side.

To B.subtilis YvsG.

It is found in the cell inner membrane. This Escherichia coli (strain K12) protein is Inner membrane protein YdjM (ydjM).